A 491-amino-acid polypeptide reads, in one-letter code: UDP-N-acetylmuramate--L-alanine ligase (491 aa).

Residue 126–132 (GTHGKTT) coordinates ATP.

This sequence belongs to the MurCDEF family.

Its subcellular location is the cytoplasm. It carries out the reaction UDP-N-acetyl-alpha-D-muramate + L-alanine + ATP = UDP-N-acetyl-alpha-D-muramoyl-L-alanine + ADP + phosphate + H(+). It functions in the pathway cell wall biogenesis; peptidoglycan biosynthesis. Cell wall formation. This Yersinia enterocolitica serotype O:8 / biotype 1B (strain NCTC 13174 / 8081) protein is UDP-N-acetylmuramate--L-alanine ligase.